A 63-amino-acid polypeptide reads, in one-letter code: Large ribosomal subunit protein bL28 (63 aa).

The protein belongs to the bacterial ribosomal protein bL28 family.

The chain is Large ribosomal subunit protein bL28 from Treponema denticola (strain ATCC 35405 / DSM 14222 / CIP 103919 / JCM 8153 / KCTC 15104).